Here is a 479-residue protein sequence, read N- to C-terminus: 5-hydroxytryptamine receptor 7 (479 aa).

Over 1–83 (MMDVNSSGRP…INYGRVEKVV (83 aa)) the chain is Extracellular. 2 N-linked (GlcNAc...) asparagine glycosylation sites follow: Asn-5 and Asn-66. The chain crosses the membrane as a helical span at residues 84–108 (IGSILTLITLLTIAGNCLVVISVCF). The Cytoplasmic portion of the chain corresponds to 109 to 118 (VKKLRQPSNY). Residues 119 to 140 (LIVSLALADLSVAVAVMPFVSV) form a helical membrane-spanning segment. The Extracellular segment spans residues 141 to 152 (TDLIGGKWIFGH). The chain crosses the membrane as a helical span at residues 153–178 (FFCNVFIAMDVMCCTASIMTLCVISI). The cysteines at positions 155 and 231 are disulfide-linked. Serotonin is bound at residue Asp-162. The Cytoplasmic portion of the chain corresponds to 179–198 (DRYLGITRPLTYPVRQNGKC). A helical membrane pass occupies residues 199 to 219 (MAKMILSVWLLSASITLPPLF). Over 220-237 (GWAQNVNDDKVCLISQDF) the chain is Extracellular. The chain crosses the membrane as a helical span at residues 238-260 (GYTIYSTAVAFYIPMSVMLFMYY). At 261 to 326 (QIYKAARKSA…SIFKREQKAA (66 aa)) the chain is on the cytoplasmic side. A helical transmembrane segment spans residues 327–352 (TTLGIIVGAFTVCWLPFFLLSTARPF). Over 353–363 (ICGTSCSCIPL) the chain is Extracellular. The helical transmembrane segment at 364–387 (WVERTFLWLGYANSLINPFIYAFF) threads the bilayer. The Cytoplasmic portion of the chain corresponds to 388-479 (NRDLRTTYRS…TVEKKVMIHD (92 aa)). A lipid anchor (S-palmitoyl cysteine) is attached at Cys-401.

The protein belongs to the G-protein coupled receptor 1 family. Predominant isoform in spleen, caudate and hippocampus. In terms of tissue distribution, expressed at lower levels. As to expression, minor isoform in terms of expression.

It is found in the cell membrane. Functionally, G-protein coupled receptor for 5-hydroxytryptamine (serotonin), a biogenic hormone that functions as a neurotransmitter, a hormone and a mitogen. Ligand binding causes a conformation change that triggers signaling via guanine nucleotide-binding proteins (G proteins) and modulates the activity of downstream effectors. HTR7 is coupled to G(s) G alpha proteins and mediates activation of adenylate cyclase activity. This is 5-hydroxytryptamine receptor 7 from Homo sapiens (Human).